The sequence spans 157 residues: Peptide methionine sulfoxide reductase MsrA (157 aa).

Cys-13 is a catalytic residue.

This sequence belongs to the MsrA Met sulfoxide reductase family.

The enzyme catalyses L-methionyl-[protein] + [thioredoxin]-disulfide + H2O = L-methionyl-(S)-S-oxide-[protein] + [thioredoxin]-dithiol. It carries out the reaction [thioredoxin]-disulfide + L-methionine + H2O = L-methionine (S)-S-oxide + [thioredoxin]-dithiol. Has an important function as a repair enzyme for proteins that have been inactivated by oxidation. Catalyzes the reversible oxidation-reduction of methionine sulfoxide in proteins to methionine. The sequence is that of Peptide methionine sulfoxide reductase MsrA from Methanococcus maripaludis (strain C7 / ATCC BAA-1331).